The primary structure comprises 52 residues: Large ribosomal subunit protein bL33 (52 aa).

The protein belongs to the bacterial ribosomal protein bL33 family.

The chain is Large ribosomal subunit protein bL33 from Chlamydia trachomatis serovar A (strain ATCC VR-571B / DSM 19440 / HAR-13).